The primary structure comprises 372 residues: Alpha-1,3-mannosyl-glycoprotein 4-beta-N-acetylglucosaminyltransferase-like protein MGAT4D (372 aa).

Topologically, residues 1 to 8 (MKTKNVNL) are cytoplasmic. Residues 9-29 (LFALVAVLLFGFSCFCISRMN) form a helical; Signal-anchor for type II membrane protein membrane-spanning segment. Residues 30–372 (QTNNQLINCR…REQHLKDHYY (343 aa)) are Lumenal-facing. N-linked (GlcNAc...) asparagine glycans are attached at residues asparagine 54 and asparagine 143.

The protein belongs to the glycosyltransferase 54 family. In terms of assembly, may self-associate; specifically in the endoplasmic reticulum prior to its translocation to the Golgi. Interacts with MGAT1, MGAT3 and MAN2A2; may interact with MGTA1 specifically in the Golgi. In terms of processing, N-glycosylated. O-glycosylated; further modified with terminal sialic acid residues. As to expression, testis.

The protein localises to the golgi apparatus membrane. It localises to the endoplasmic reticulum membrane. Its function is as follows. May play a role in male spermatogenesis. In vitro acts as inhibitor of MGAT1 activity causing cell surface proteins to carry mainly high mannose N-glycans. The function is mediated by its lumenal domain and occurs specifically in the Golgi. A catalytic glucosyltransferase activity is not detected. May be involved in regulation of Sertoli-germ cell interactions during specific stages of spermatogenesis. This is Alpha-1,3-mannosyl-glycoprotein 4-beta-N-acetylglucosaminyltransferase-like protein MGAT4D from Rattus norvegicus (Rat).